A 709-amino-acid polypeptide reads, in one-letter code: Glycerol kinase (709 aa).

Residue threonine 56 participates in substrate binding. Residue arginine 60 participates in ATP binding. The tract at residues 86–110 is disordered; the sequence is KIGVSGLRRPSTAPARETPNAGDIK. Substrate contacts are provided by arginine 201, tyrosine 258, and aspartate 386. Residues threonine 408, glycine 463, and 584 to 588 contribute to the ATP site; that span reads GMSRS.

The protein belongs to the FGGY kinase family.

It catalyses the reaction glycerol + ATP = sn-glycerol 3-phosphate + ADP + H(+). Its pathway is polyol metabolism; glycerol degradation via glycerol kinase pathway; sn-glycerol 3-phosphate from glycerol: step 1/1. Key enzyme in the regulation of glycerol uptake and metabolism. Catalyzes the phosphorylation of glycerol to yield sn-glycerol 3-phosphate. This is Glycerol kinase (GUT1) from Saccharomyces cerevisiae (strain ATCC 204508 / S288c) (Baker's yeast).